The sequence spans 241 residues: Orotidine 5'-phosphate decarboxylase (241 aa).

Substrate-binding positions include Asp-15, Lys-37, 64–73 (DLKYHDIPNT), Thr-126, Arg-187, Gln-196, Gly-216, and Arg-217. Lys-66 serves as the catalytic Proton donor.

The protein belongs to the OMP decarboxylase family. Type 1 subfamily. In terms of assembly, homodimer.

It carries out the reaction orotidine 5'-phosphate + H(+) = UMP + CO2. The protein operates within pyrimidine metabolism; UMP biosynthesis via de novo pathway; UMP from orotate: step 2/2. In terms of biological role, catalyzes the decarboxylation of orotidine 5'-monophosphate (OMP) to uridine 5'-monophosphate (UMP). The protein is Orotidine 5'-phosphate decarboxylase of Trichlorobacter lovleyi (strain ATCC BAA-1151 / DSM 17278 / SZ) (Geobacter lovleyi).